The sequence spans 99 residues: MKGTFSKGFVPPRRFTRLHPLRMRQREQQPRLRTEVQRISALQHQVQVRVRVQVQVQVRVQVRVQVRVQVRVRVQGRGQCHWYRRRRPWFPSRLCLCLP.

The polypeptide is Duplicate procyclin (Trypanosoma brucei brucei).